Consider the following 480-residue polypeptide: Coronin-2B (480 aa).

5 WD repeats span residues glycine 85–asparagine 125, glycine 135–aspartate 177, histidine 179–glutamate 217, cysteine 220–isoleucine 263, and glutamate 265–serine 308. Residues asparagine 436 to asparagine 479 are a coiled coil.

This sequence belongs to the WD repeat coronin family. As to quaternary structure, binds to F-actin and to vinculin.

Its subcellular location is the cytoplasm. It localises to the cytoskeleton. Its function is as follows. May play a role in the reorganization of neuronal actin structure. In Mus musculus (Mouse), this protein is Coronin-2B (Coro2b).